Reading from the N-terminus, the 444-residue chain is 23S rRNA (uracil(1939)-C(5))-methyltransferase RlmD (444 aa).

Positions 5 to 67 (RNRLDRTPFQ…RHFDEAKTVG (63 aa)) constitute a TRAM domain. [4Fe-4S] cluster-binding residues include Cys80, Cys86, Cys89, and Cys168. Residues Gln276, Phe305, Asn310, Glu326, Asp353, and Asp374 each coordinate S-adenosyl-L-methionine. Cys400 functions as the Nucleophile in the catalytic mechanism.

Belongs to the class I-like SAM-binding methyltransferase superfamily. RNA M5U methyltransferase family. RlmD subfamily.

It carries out the reaction uridine(1939) in 23S rRNA + S-adenosyl-L-methionine = 5-methyluridine(1939) in 23S rRNA + S-adenosyl-L-homocysteine + H(+). Functionally, catalyzes the formation of 5-methyl-uridine at position 1939 (m5U1939) in 23S rRNA. The sequence is that of 23S rRNA (uracil(1939)-C(5))-methyltransferase RlmD from Xanthomonas axonopodis pv. citri (strain 306).